Consider the following 1127-residue polypeptide: Glutamate receptor-interacting protein 1 (1127 aa).

Residue Gln-11 is the site of S-palmitoyl cysteine attachment. Phosphoserine is present on Ser-43. PDZ domains lie at 53 to 136, 150 to 238, 252 to 336, 471 to 560, 572 to 657, and 672 to 754; these read VVEL…EYEL, TVEV…EYDV, LVEV…LPHH, EVVL…EFDV, HVKL…RKDE, and TVEL…KKQT. Disordered regions lie at residues 752 to 802, 840 to 865, and 942 to 980; these read KQTD…PSVD, KQRTSLSPVPKPRSQTYPDVGLSNED, and MARSQLGRQASFQERSSSRPHYSQTTRSNTLPSDVGRKS. 2 stretches are compositionally biased toward polar residues: residues 840–856 and 947–973; these read KQRTSLSPVPKPRSQTY and LGRQASFQERSSSRPHYSQTTRSNTLP. The region spanning 1003 to 1085 is the PDZ 7 domain; that stretch reads KVTLYKDSGM…KLDLVISRNP (83 aa). The tract at residues 1108–1127 is disordered; that stretch reads FFQQPSHGGNLETREPTNTL.

As to quaternary structure, interacts with EFNB3, GRIA2, GRIA3, GRIPAP1/GRASP1, PPFIA1, PPFIA4, FRAS1, PTPRF, liprins-alpha and the C-terminal tail of PRLHR. Can form homomultimers or heteromultimers with GRIP2. Interacts with EFNB1, EPHA7, EPHB2, KIF5A, KIF5B and KIF5C. Forms a ternary complex with GRIA2 and CSPG4. Interacts with ATAD1 in an ATP-dependent manner. ATAD1-catalyzed ATP hydrolysis disrupts binding to ATAD1 and to GRIA2 and leads to AMPAR complex disassembly. Interacts with SLC30A9 and PLCD4. Interacts with BUD23. Forms a complex with NSG1, GRIA2 and STX12; controls the intracellular fate of AMPAR and the endosomal sorting of the GRIA2 subunit toward recycling and membrane targeting. Interacts with NSG1. Palmitoylation of isoform 2. As to expression, expressed in brain. Isoform 2 is the major isoform in brain. Expressed in oligodendrocyte lineage cells.

The protein localises to the membrane. It localises to the cytoplasmic vesicle. Its subcellular location is the perikaryon. It is found in the cell projection. The protein resides in the dendrite. The protein localises to the cytoplasm. It localises to the endomembrane system. Its subcellular location is the postsynaptic cell membrane. It is found in the postsynaptic density. The protein resides in the endoplasmic reticulum membrane. In terms of biological role, may play a role as a localized scaffold for the assembly of a multiprotein signaling complex and as mediator of the trafficking of its binding partners at specific subcellular location in neurons. Through complex formation with NSG1, GRIA2 and STX12 controls the intracellular fate of AMPAR and the endosomal sorting of the GRIA2 subunit toward recycling and membrane targeting. This is Glutamate receptor-interacting protein 1 (Grip1) from Mus musculus (Mouse).